Reading from the N-terminus, the 136-residue chain is Large ribosomal subunit protein uL16c (136 aa).

This sequence belongs to the universal ribosomal protein uL16 family. Part of the 50S ribosomal subunit.

It is found in the plastid. It localises to the chloroplast. This is Large ribosomal subunit protein uL16c from Illicium oligandrum (Star anise).